The sequence spans 106 residues: COX assembly mitochondrial protein homolog (106 aa).

Position 2 is an N-acetylalanine (alanine 2). One can recognise a CHCH domain in the interval 28–71; it reads RERCSEQVQDFTKCCKDSGVLMVVKCRKENSALKDCLTSYYKDP. 2 short sequence motifs (cx9C motif) span residues 31-41 and 53-63; these read CSEQVQDFTKC and CRKENSALKDC. Intrachain disulfides connect cysteine 31-cysteine 63 and cysteine 41-cysteine 53.

The protein belongs to the CMC family. As to quaternary structure, component of the MITRAC (mitochondrial translation regulation assembly intermediate of cytochrome c oxidase complex) complex, the core components of this complex being COA3/MITRAC12 and COX14.

The protein resides in the mitochondrion. In terms of biological role, component of the MITRAC (mitochondrial translation regulation assembly intermediate of cytochrome c oxidase complex) complex, that regulates cytochrome c oxidase assembly. The chain is COX assembly mitochondrial protein homolog (CMC1) from Bos taurus (Bovine).